A 352-amino-acid chain; its full sequence is Ubiquitin thioesterase otulin (352 aa).

The segment at 1–48 (MSRGTMPQPEAWPGASCAETPAREAAATARDGGKAAASGQPRPEMQCP) is disordered. Residues 18-37 (AETPAREAAATARDGGKAAA) are compositionally biased toward low complexity. The PIM motif motif lies at 52 to 57 (EEDMYR). Y56 bears the Phosphotyrosine mark. Linear diubiquitin binding stretches follow at residues 95-96 (EW) and 124-126 (RGD). In terms of domain architecture, OTU spans 118-346 (TSIRRVRGDN…DRHYNIPVRV (229 aa)). Residue D126 is part of the active site. C129 serves as the catalytic Nucleophile. Linear diubiquitin binding stretches follow at residues 255 to 259 (FFSVL), 283 to 289 (TGGLEQV), and 336 to 338 (DDR). Residue H339 is part of the active site.

Belongs to the peptidase C65 family. Otulin subfamily. Interacts (via the PUB domain) with RNF31 (via the PIM motif); the interaction is direct. Interacts with DVL2. Post-translationally, ubiquitinated. Acetylated. In terms of processing, phosphorylated. Phosphorylation at Tyr-56 prevents interaction with RNF31; dephosphorylation promotes interaction with RNF31 and the LUBAC complex.

It is found in the cytoplasm. It catalyses the reaction Thiol-dependent hydrolysis of ester, thioester, amide, peptide and isopeptide bonds formed by the C-terminal Gly of ubiquitin (a 76-residue protein attached to proteins as an intracellular targeting signal).. In terms of biological role, deubiquitinase that specifically removes linear ('Met-1'-linked) polyubiquitin chains to substrates and acts as a regulator of angiogenesis and innate immune response. Required during angiogenesis, craniofacial and neuronal development by regulating the canonical Wnt signaling together with the LUBAC complex. Acts as a negative regulator of NF-kappa-B by regulating the activity of the LUBAC complex. OTULIN function is mainly restricted to homeostasis of the LUBAC complex: acts by removing 'Met-1'-linked autoubiquitination of the LUBAC complex, thereby preventing inactivation of the LUBAC complex. Acts as a key negative regulator of inflammation by restricting spontaneous inflammation and maintaining immune homeostasis. In myeloid cell, required to prevent unwarranted secretion of cytokines leading to inflammation and autoimmunity by restricting linear polyubiquitin formation. Plays a role in innate immune response by restricting linear polyubiquitin formation on LUBAC complex in response to NOD2 stimulation, probably to limit NOD2-dependent pro-inflammatory signaling. The sequence is that of Ubiquitin thioesterase otulin from Homo sapiens (Human).